The primary structure comprises 433 residues: Phosphomethylpyrimidine synthase (433 aa).

Residues Asn66, Met94, Tyr123, His162, 184-186 (SRG), 225-228 (DALR), and Glu264 each bind substrate. His268 contacts Zn(2+). Tyr291 is a binding site for substrate. His332 contacts Zn(2+). Residues Cys408, Cys411, and Cys415 each coordinate [4Fe-4S] cluster.

This sequence belongs to the ThiC family. [4Fe-4S] cluster serves as cofactor.

The enzyme catalyses 5-amino-1-(5-phospho-beta-D-ribosyl)imidazole + S-adenosyl-L-methionine = 4-amino-2-methyl-5-(phosphooxymethyl)pyrimidine + CO + 5'-deoxyadenosine + formate + L-methionine + 3 H(+). The protein operates within cofactor biosynthesis; thiamine diphosphate biosynthesis. Catalyzes the synthesis of the hydroxymethylpyrimidine phosphate (HMP-P) moiety of thiamine from aminoimidazole ribotide (AIR) in a radical S-adenosyl-L-methionine (SAM)-dependent reaction. This chain is Phosphomethylpyrimidine synthase, found in Saccharolobus islandicus (strain M.14.25 / Kamchatka #1) (Sulfolobus islandicus).